Consider the following 474-residue polypeptide: Cytochrome c-552 (474 aa).

The signal sequence occupies residues 1–29; the sequence is MSIKHWMASSVSVTALVMTALLNITAVSA. Residue His91 coordinates heme c. Residues Cys119, Cys122, and Lys123 each coordinate heme. Heme c is bound by residues Cys157, Cys160, His161, Cys206, Cys209, and His210. Ca(2+) contacts are provided by Glu212, Tyr213, Lys258, and Gln260. Tyr213 is a substrate binding site. Residue His261 participates in substrate binding. The heme c site is built by His272, Cys279, Cys282, His283, His298, Cys311, Cys314, His315, and His390.

This sequence belongs to the cytochrome c-552 family. It depends on Ca(2+) as a cofactor. Heme c is required as a cofactor.

It localises to the periplasm. The catalysed reaction is 6 Fe(III)-[cytochrome c] + NH4(+) + 2 H2O = 6 Fe(II)-[cytochrome c] + nitrite + 8 H(+). The protein operates within nitrogen metabolism; nitrate reduction (assimilation). Catalyzes the reduction of nitrite to ammonia, consuming six electrons in the process. The sequence is that of Cytochrome c-552 from Vibrio vulnificus (strain CMCP6).